Reading from the N-terminus, the 449-residue chain is Aspartate aminotransferase 3, chloroplastic (449 aa).

Residues 1 to 43 (MKTTHFSSSSSSDRRIGALLRHLNSGSDSDNLSSLYASPTSGG) constitute a chloroplast transit peptide. Gly81, Trp178, and Asn231 together coordinate L-aspartate. At Lys295 the chain carries N6-(pyridoxal phosphate)lysine. Arg423 is an L-aspartate binding site.

The protein belongs to the class-I pyridoxal-phosphate-dependent aminotransferase family. In terms of assembly, homodimer. Pyridoxal 5'-phosphate is required as a cofactor. In terms of tissue distribution, expressed in roots, cauline leaves, flowers, hypocotyl epidermis and root hair cells.

Its subcellular location is the plastid. It is found in the chloroplast. The enzyme catalyses L-aspartate + 2-oxoglutarate = oxaloacetate + L-glutamate. Amino acid aminotransferase important for the metabolism of amino acids and Krebs-cycle related organic acids. No activity with D-Asp or D-Ala as amino donors. In plants, it is involved in nitrogen metabolism and in aspects of carbon and energy metabolism. The protein is Aspartate aminotransferase 3, chloroplastic (ASP3) of Arabidopsis thaliana (Mouse-ear cress).